We begin with the raw amino-acid sequence, 600 residues long: DNA mismatch repair protein MutL (600 aa).

The segment at 348-375 (QPQAQRPQTAWSAETSPFRPYQPTTGFS) is disordered. A compositionally biased stretch (polar residues) spans 349-362 (PQAQRPQTAWSAET).

This sequence belongs to the DNA mismatch repair MutL/HexB family.

Its function is as follows. This protein is involved in the repair of mismatches in DNA. It is required for dam-dependent methyl-directed DNA mismatch repair. May act as a 'molecular matchmaker', a protein that promotes the formation of a stable complex between two or more DNA-binding proteins in an ATP-dependent manner without itself being part of a final effector complex. This is DNA mismatch repair protein MutL from Rhizobium leguminosarum bv. trifolii (strain WSM2304).